We begin with the raw amino-acid sequence, 217 residues long: MOB kinase activator 3A (217 aa).

Residues Cys-83, Cys-88, His-165, and His-170 each contribute to the Zn(2+) site.

It belongs to the MOB1/phocein family.

May regulate the activity of kinases. The protein is MOB kinase activator 3A (Mob3a) of Mus musculus (Mouse).